Reading from the N-terminus, the 364-residue chain is Alanine racemase (364 aa).

Catalysis depends on lysine 35, which acts as the Proton acceptor; specific for D-alanine. Lysine 35 carries the N6-(pyridoxal phosphate)lysine modification. A substrate-binding site is contributed by arginine 136. Tyrosine 261 acts as the Proton acceptor; specific for L-alanine in catalysis. Methionine 309 contributes to the substrate binding site.

This sequence belongs to the alanine racemase family. The cofactor is pyridoxal 5'-phosphate.

The catalysed reaction is L-alanine = D-alanine. The protein operates within amino-acid biosynthesis; D-alanine biosynthesis; D-alanine from L-alanine: step 1/1. Its function is as follows. Catalyzes the interconversion of L-alanine and D-alanine. May also act on other amino acids. The protein is Alanine racemase (alr) of Shewanella amazonensis (strain ATCC BAA-1098 / SB2B).